The chain runs to 112 residues: M-myrmeciitoxin-Mp1 (112 aa).

Residues 1–26 form the signal peptide; the sequence is MKLSCLLLTLTIIFVLTIVHAPNVEA. Residues 27–56 constitute a propeptide that is removed on maturation; the sequence is KDLADPESEAVGFADAFGEADAVGEADPNA. The interval 57–78 is critical for cytotoxic activity; it reads GLGSVFGRLARILGRVIPKVAK. The interval 93–106 is igE-binding determinant; that stretch reads KEAIPMAVEMAKSQ.

Belongs to the formicidae venom precursor-01 superfamily. Ant pilosulin family. Expressed by the venom gland.

It localises to the secreted. Functionally, has strong cytotoxic and hemolytic activities. Is more potent against mononuclear leukocytes than against granulocytes. The synthesized peptide 57-76 shows a potent and broad spectrum antimicrobial activity against both Gram-positive and Gram-negative bacteria, and also against the fungus C.albicans. Adopts an alpha-helical structure. This chain is M-myrmeciitoxin-Mp1, found in Myrmecia pilosula (Jack jumper ant).